A 263-amino-acid polypeptide reads, in one-letter code: Dermonecrotic toxin SpaSicTox-betaIF1 (263 aa).

Mg(2+)-binding residues include Glu15 and Asp17. The Nucleophile role is filled by His31. Disulfide bonds link Cys35–Cys41 and Cys37–Cys179. Asp75 lines the Mg(2+) pocket.

The protein belongs to the arthropod phospholipase D family. Class II subfamily. It depends on Mg(2+) as a cofactor. Expressed by the venom gland.

The protein localises to the secreted. The catalysed reaction is an N-(acyl)-sphingosylphosphocholine = an N-(acyl)-sphingosyl-1,3-cyclic phosphate + choline. It catalyses the reaction an N-(acyl)-sphingosylphosphoethanolamine = an N-(acyl)-sphingosyl-1,3-cyclic phosphate + ethanolamine. The enzyme catalyses a 1-acyl-sn-glycero-3-phosphocholine = a 1-acyl-sn-glycero-2,3-cyclic phosphate + choline. It carries out the reaction a 1-acyl-sn-glycero-3-phosphoethanolamine = a 1-acyl-sn-glycero-2,3-cyclic phosphate + ethanolamine. Functionally, dermonecrotic toxins cleave the phosphodiester linkage between the phosphate and headgroup of certain phospholipids (sphingolipid and lysolipid substrates), forming an alcohol (often choline) and a cyclic phosphate. This toxin acts on sphingomyelin (SM). It may also act on ceramide phosphoethanolamine (CPE), lysophosphatidylcholine (LPC) and lysophosphatidylethanolamine (LPE), but not on lysophosphatidylserine (LPS), and lysophosphatidylglycerol (LPG). It acts by transphosphatidylation, releasing exclusively cyclic phosphate products as second products. Induces dermonecrosis, hemolysis, increased vascular permeability, edema, inflammatory response, and platelet aggregation. The polypeptide is Dermonecrotic toxin SpaSicTox-betaIF1 (Sicarius patagonicus (Six-eyed sand spider)).